The following is a 955-amino-acid chain: Leucine-rich repeat-containing G-protein coupled receptor 4 (955 aa).

Residues 1–21 (MGCPGWPLALFALLLASCSGG) form the signal peptide. At 22-547 (PSGVSSPAPC…LLGSWMIRLT (526 aa)) the chain is on the extracellular side. In terms of domain architecture, LRRNT spans 26-59 (SSPAPCPAPCACDLDGGADCSGKGLVTVPDGLSV). 2 cysteine pairs are disulfide-bonded: Cys-31-Cys-37 and Cys-35-Cys-45. LRR repeat units follow at residues 57–81 (LSVFTHSLDLSMNNITKLPEGAFKG), 83–105 (PYLEELRLAGNDLSIIHPMALSG), 106–129 (LKELKVLTLQNNQLKTVPSESLKG), 131–153 (VSLQSLRLDANHIVTVPEDSFEG), 155–177 (VQLRHLWLDDNSLTEVPIRPLSN), 178–201 (LPSLQALTLALNKISHIPDYAFSN), 203–225 (SSLVVLHLHNNKIRTLGPHCFHG), 226–249 (LDNLEALDLNYNNLIDFPDSIRSL), 250–272 (PNLKELGFHSNSITIIPDGAFVK), and 274–296 (PLLRTIHLYDNPLSFVGNSAFQN). Asn-201 carries an N-linked (GlcNAc...) asparagine glycan. N-linked (GlcNAc...) asparagine glycosylation is found at Asn-296 and Asn-316. LRR repeat units follow at residues 320–343 (TNNLESLTLTGTKIRSIPIKFCQE), 345–365 (KMLRTLDLSYNEISALVGFEG), 366–389 (CSSLEEVYLQNNQIQEVQNETFQG), 390–413 (LAALRMLDLSRNRIHTIHKEAFVT), and 415–437 (KALTNLDLSFNDLTAFPTAGLHG). A disulfide bridge connects residues Cys-341 and Cys-366. N-linked (GlcNAc...) asparagine glycosylation is present at Asn-384. 2 cysteine pairs are disulfide-bonded: Cys-472-Cys-525 and Cys-473-Cys-478. Residues 548-568 (VWFIFLLALIFNVIVIVTMFA) traverse the membrane as a helical segment. Over 569–578 (SCSQLTSSKL) the chain is Cytoplasmic. Residues 579-599 (FIGLIAVSNLFMGVYTGTLTV) form a helical membrane-spanning segment. Over 600-623 (LDTISWGQFAEFGIWWETGNGCKV) the chain is Extracellular. An intrachain disulfide couples Cys-621 to Cys-696. The chain crosses the membrane as a helical span at residues 624–644 (AGFLAIFSSESAIFFLMLAAI). Residues 645–666 (ERSLSAKDIIKKEKHQHLRKFQ) are Cytoplasmic-facing. The chain crosses the membrane as a helical span at residues 667 to 687 (VASLLAVLLAAAAGCLPLFHI). Topologically, residues 688–706 (GEFSSSPLCLPFPTGETPS) are extracellular. Residues 707–727 (LGFTVTLVLLNSLAFLIMVIT) form a helical membrane-spanning segment. Topologically, residues 728–759 (YTKLYCTIEKEDLSENAESSMIKHVAWLIFTN) are cytoplasmic. A helical transmembrane segment spans residues 760–780 (CIFFCPVAFFSFAPLITAIYI). The Extracellular portion of the chain corresponds to 781 to 786 (SPEIMK). The helical transmembrane segment at 787-807 (SVTLIFLPLPACLNPVLYVFF) threads the bilayer. The Cytoplasmic portion of the chain corresponds to 808–955 (NPKFKEDWKL…YAYNIPRMKD (148 aa)).

The protein belongs to the G-protein coupled receptor 1 family.

The protein localises to the cell membrane. Functionally, receptor for R-spondins that potentiates the canonical Wnt signaling pathway and is involved in the formation of various organs. Upon binding to R-spondins (RSPO1, RSPO2, RSPO3 or RSPO4), associates with phosphorylated LRP6 and frizzled receptors that are activated by extracellular Wnt receptors, triggering the canonical Wnt signaling pathway to increase expression of target genes. In contrast to classical G-protein coupled receptors, does not activate heterotrimeric G-proteins to transduce the signal. Its function as activator of the Wnt signaling pathway is required for the development of various organs, including liver, kidney, intestine, bone, reproductive tract and eye. May play a role in regulating the circadian rhythms of plasma lipids. Required for proper development of GnRH neurons (gonadotropin-releasing hormone expressing neurons) that control the release of reproductive hormones from the pituitary gland. This Xenopus tropicalis (Western clawed frog) protein is Leucine-rich repeat-containing G-protein coupled receptor 4 (lgr4).